The sequence spans 1350 residues: uncharacterized protein (1350 aa).

2 disordered regions span residues 348-371 (SLVG…LDDS) and 923-944 (SKME…RGTG). Residues 923–932 (SKMEGGERDA) are compositionally biased toward basic and acidic residues.

This is an uncharacterized protein from Ictalurid herpesvirus 1 (strain Auburn) (IcHV-1).